Here is an 86-residue protein sequence, read N- to C-terminus: Exodeoxyribonuclease 7 small subunit (86 aa).

Residues 1-26 (MQDELFETEKAPQKNTKNAKNAPKKS) are disordered.

Belongs to the XseB family. In terms of assembly, heterooligomer composed of large and small subunits.

Its subcellular location is the cytoplasm. The enzyme catalyses Exonucleolytic cleavage in either 5'- to 3'- or 3'- to 5'-direction to yield nucleoside 5'-phosphates.. In terms of biological role, bidirectionally degrades single-stranded DNA into large acid-insoluble oligonucleotides, which are then degraded further into small acid-soluble oligonucleotides. The chain is Exodeoxyribonuclease 7 small subunit from Helicobacter pylori (strain HPAG1).